The following is a 286-amino-acid chain: Aquaporin NIP4-1 (286 aa).

Helical transmembrane passes span Val-59–Met-79 and Leu-86–Leu-106. Residues Asn-112–Ala-114 carry the NPA 1 motif. Helical transmembrane passes span Leu-133 to Met-153, Leu-173 to Ala-193, and Thr-201 to Val-221. The NPA 2 signature appears at Asn-227 to Ala-229. Residues Tyr-241 to Cys-261 traverse the membrane as a helical segment.

Belongs to the MIP/aquaporin (TC 1.A.8) family. NIP (TC 1.A.8.12) subfamily. In terms of tissue distribution, expressed in leaves and at lower levels in roots.

It is found in the membrane. In terms of biological role, aquaporins facilitate the transport of water and small neutral solutes across cell membranes. The sequence is that of Aquaporin NIP4-1 (NIP4-1) from Oryza sativa subsp. japonica (Rice).